The following is a 631-amino-acid chain: Phosphomethylpyrimidine synthase (631 aa).

Substrate-binding positions include asparagine 239, methionine 268, tyrosine 297, histidine 333, 353–355 (SRG), 394–397 (DGLR), and glutamate 433. Residue histidine 437 coordinates Zn(2+). Tyrosine 460 contributes to the substrate binding site. Histidine 501 is a Zn(2+) binding site. Cysteine 581, cysteine 584, and cysteine 589 together coordinate [4Fe-4S] cluster.

This sequence belongs to the ThiC family. Homodimer. Requires [4Fe-4S] cluster as cofactor.

It catalyses the reaction 5-amino-1-(5-phospho-beta-D-ribosyl)imidazole + S-adenosyl-L-methionine = 4-amino-2-methyl-5-(phosphooxymethyl)pyrimidine + CO + 5'-deoxyadenosine + formate + L-methionine + 3 H(+). It participates in cofactor biosynthesis; thiamine diphosphate biosynthesis. In terms of biological role, catalyzes the synthesis of the hydroxymethylpyrimidine phosphate (HMP-P) moiety of thiamine from aminoimidazole ribotide (AIR) in a radical S-adenosyl-L-methionine (SAM)-dependent reaction. The protein is Phosphomethylpyrimidine synthase of Salmonella paratyphi C (strain RKS4594).